Consider the following 399-residue polypeptide: Forkhead box protein A4 (399 aa).

Positions 119 to 213 (KPPYSYISLI…ENGCYLRRQK (95 aa)) form a DNA-binding region, fork-head. Residues 219-234 (RSKSGEREKKVNKPGD) are compositionally biased toward basic and acidic residues. Positions 219-290 (RSKSGEREKK…VGLSPTSEQA (72 aa)) are disordered. The segment covering 267 to 277 (STGSSIHQASG) has biased composition (polar residues).

Its subcellular location is the nucleus. Functionally, transcriptional repressor involved in embryonic nervous system development. Plays a role in the induction and patterning of the anterior-posterior neural axis. Involved in the establishment of floor plate differentiation from neural plate cells during gastrulation. Binds the anf1 promoter sequence to restrict expression of anf1 to the anterior of the neural plate, thereby patterning the forebrain. Can bind to the HNF-3-alpha DNA target sequence. Cooperates with t/bra in a dose-dependent manner to specify dorsal mesoderm formation, including notochord. May be involved in the dorso-ventral patterning of the mesoderm. Binds to DNA via the target sequence 5'-[GA]TAAA[TC]A-3', with 5'-GTAAATA-3' being the preferred binding site. In Xenopus tropicalis (Western clawed frog), this protein is Forkhead box protein A4.